Consider the following 300-residue polypeptide: Taste receptor type 2 member 105 (300 aa).

Over 1–7 (MLSAAEG) the chain is Extracellular. Residues 8-28 (ILLSIATVEAGLGVLGNTFIA) traverse the membrane as a helical segment. Over 29–43 (LVNCMDWAKNNKLSM) the chain is Cytoplasmic. Residues 44–64 (TGFLLIGLATSRIFIVWLLTL) traverse the membrane as a helical segment. Residues 65 to 87 (DAYAKLFYPSKYFSSSLIEIISY) lie on the Extracellular side of the membrane. A helical transmembrane segment spans residues 88–108 (IWMTVNHLTVWFATSLSIFYF). Residues 109–128 (LKIANFSDCVFLWLKRRTDK) are Cytoplasmic-facing. Residues 129-149 (AFVFLLGCLLTSWVISFSFVV) form a helical membrane-spanning segment. The Extracellular portion of the chain corresponds to 150–181 (KVMKDGKVNHRNRTSEMYWEKRQFTINYVFLN). Asparagine 161 carries an N-linked (GlcNAc...) asparagine glycan. The chain crosses the membrane as a helical span at residues 182–202 (IGVISLFMMTLTACFLLIMSL). Over 203–233 (WRHSRQMQSGVSGFRDLNTEAHVKAIKFLIS) the chain is Cytoplasmic. A helical membrane pass occupies residues 234-254 (FIILFVLYFIGVSIEIICIFI). Topologically, residues 255–259 (PENKL) are extracellular. Residues 260-280 (LFIFGFTTASIYPCCHSFILI) form a helical membrane-spanning segment. Over 281-300 (LSNSQLKQAFVKVLQGLKFF) the chain is Cytoplasmic.

This sequence belongs to the G-protein coupled receptor T2R family. In terms of tissue distribution, expressed in subsets of taste receptor cells of the tongue and palate epithelium and exclusively in gustducin-positive cells. Expressed in gastric and duodenal tissues.

The protein resides in the membrane. Gustducin-coupled cycloheximide receptor implicated in the perception of bitter compounds in the oral cavity and the gastrointestinal tract. Signals through PLCB2 and the calcium-regulated cation channel TRPM5. The polypeptide is Taste receptor type 2 member 105 (Tas2r105) (Mus musculus (Mouse)).